The primary structure comprises 309 residues: MTVTVKMLVDKLKLKVVYGNEELLAKAITTADISRPGLEMAGYFDYYSPERLQLVGMKEWTYLKTMTANNRYSVFANIFREETPAVIVARGLEIPEEMLQAAKENGVAVLQGRNSTSSLSGDMSWYLNSQLAERTSVHGVLVDIYGMGVLIQGDSGIGKSETALELVKRGHRLVADDRVDVYAKDEGTLWGEPAEILLHLLEIRGVGIIDVMSLYGASAVRDSSQVQLCICLEHFENDEVFDRLGNSNEEIELQGVKIPRIRIPVKTGRNVSVVIEAAAMNYRAKQMGYDATKTFKDRLTDLISKNGED.

Active-site residues include histidine 138 and lysine 159. An ATP-binding site is contributed by 153–160 (GDSGIGKS). Residue serine 160 participates in Mg(2+) binding. Aspartate 177 acts as the Proton acceptor; for phosphorylation activity. Proton donor; for dephosphorylation activity in catalysis. Residues 201–210 (LEIRGVGIID) are important for the catalytic mechanism of both phosphorylation and dephosphorylation. Glutamate 202 lines the Mg(2+) pocket. Arginine 243 is a catalytic residue. The segment at 264–269 (PVKTGR) is important for the catalytic mechanism of dephosphorylation.

It belongs to the HPrK/P family. Homohexamer. The cofactor is Mg(2+).

It catalyses the reaction [HPr protein]-L-serine + ATP = [HPr protein]-O-phospho-L-serine + ADP + H(+). The enzyme catalyses [HPr protein]-O-phospho-L-serine + phosphate + H(+) = [HPr protein]-L-serine + diphosphate. Functionally, catalyzes the ATP- as well as the pyrophosphate-dependent phosphorylation of a specific serine residue in HPr, a phosphocarrier protein of the phosphoenolpyruvate-dependent sugar phosphotransferase system (PTS). HprK/P also catalyzes the pyrophosphate-producing, inorganic phosphate-dependent dephosphorylation (phosphorolysis) of seryl-phosphorylated HPr (P-Ser-HPr). The two antagonistic activities of HprK/P are regulated by several intracellular metabolites, which change their concentration in response to the absence or presence of rapidly metabolisable carbon sources (glucose, fructose, etc.) in the growth medium. Therefore, by controlling the phosphorylation state of HPr, HPrK/P is a sensor enzyme that plays a major role in the regulation of carbon metabolism and sugar transport: it mediates carbon catabolite repression (CCR), and regulates PTS-catalyzed carbohydrate uptake and inducer exclusion. The sequence is that of HPr kinase/phosphorylase from Streptococcus thermophilus (strain CNRZ 1066).